The primary structure comprises 2207 residues: Mediator of RNA polymerase II transcription subunit 13-like (2207 aa).

Residues 337-355 (VQSAASHLGSQDGGMSTMH) show a composition bias toward polar residues. Disordered regions lie at residues 337-368 (VQSAASHLGSQDGGMSTMHSPKRSRKTPPKLH), 384-403 (AQSKRSQMSTPTREEEAAHS), 431-479 (VGPS…KRPL), and 519-574 (KYDK…VPVN). Over residues 356-368 (SPKRSRKTPPKLH) the composition is skewed to basic residues. Residues 384-394 (AQSKRSQMSTP) are compositionally biased toward polar residues. Positions 442 to 453 (PGFSAGLPSSSS) are enriched in low complexity. The segment covering 463–475 (KTTERQEKGDKLQ) has biased composition (basic and acidic residues). Residues 528–539 (SRNTSKQMNLNP) show a composition bias toward polar residues. The span at 546–555 (PISPLPPTLS) shows a compositional bias: pro residues. Ser-548 and Ser-555 each carry phosphoserine. The LXXLL motif 1 motif lies at 664 to 668 (LQRLL). Positions 731-747 (GTEKDSLKKNKSEDGFG) are enriched in basic and acidic residues. Positions 731–767 (GTEKDSLKKNKSEDGFGTKDVTTPGHSTPVPDGKNAM) are disordered. A phosphoserine mark is found at Ser-812 and Ser-821. The interval 816–847 (ELGAVSPALRSSKMPTVGTEERPPGKDGRAAG) is disordered. A compositionally biased stretch (basic and acidic residues) spans 834 to 844 (TEERPPGKDGR). A Phosphoserine modification is found at Ser-918. The interval 1004–1091 (DPDYVNTPQM…STTRPLNSVE (88 aa)) is disordered. The segment covering 1009–1019 (NTPQMNTPVTL) has biased composition (polar residues). Over residues 1020-1031 (NSAAPASNSGAG) the composition is skewed to low complexity. Residues 1072-1087 (TDQGSPASTPSTTRPL) show a composition bias toward polar residues. The LXXLL motif 2 motif lies at 1224–1228 (LLLLL). Positions 1379 to 1400 (LPIPTLLVGYDKEFLTISPFSL) are leucine-zipper. Disordered stretches follow at residues 1523–1652 (LMPP…SVTE) and 2042–2077 (GNLHSSPNSSPVPSPGSPSGIGVGSHFQHSRSQGER). Over residues 1541-1593 (PGNAGSLPSNSGSGAPPAGSAFNPTSSSSANPTTSSSSASSGPPGSSAASAPG) the composition is skewed to low complexity. Composition is skewed to polar residues over residues 1612–1624 (QNPSAGGSSTDRT) and 1635–1649 (PGQSCTQSSQDGQDS). Ser-2080 carries the phosphoserine modification.

It belongs to the Mediator complex subunit 13 family. Component of the Mediator complex, which is composed of MED1, MED4, MED6, MED7, MED8, MED9, MED10, MED11, MED12, MED13, MED13L, MED14, MED15, MED16, MED17, MED18, MED19, MED20, MED21, MED22, MED23, MED24, MED25, MED26, MED27, MED29, MED30, MED31, CCNC, CDK8 and CDC2L6/CDK11. The MED12, MED13, CCNC and CDK8 subunits form a distinct module termed the CDK8 module. Mediator containing the CDK8 module is less active than Mediator lacking this module in supporting transcriptional activation. Individual preparations of the Mediator complex lacking one or more distinct subunits have been variously termed ARC, CRSP, DRIP, PC2, SMCC and TRAP. In terms of tissue distribution, highly expressed in heart and weakly expressed in brain, spleen, lung, liver, kidney and testis.

The protein localises to the nucleus. In terms of biological role, component of the Mediator complex, a coactivator involved in the regulated transcription of nearly all RNA polymerase II-dependent genes. Mediator functions as a bridge to convey information from gene-specific regulatory proteins to the basal RNA polymerase II transcription machinery. Mediator is recruited to promoters by direct interactions with regulatory proteins and serves as a scaffold for the assembly of a functional preinitiation complex with RNA polymerase II and the general transcription factors. This subunit may specifically regulate transcription of targets of the Wnt signaling pathway and SHH signaling pathway. The polypeptide is Mediator of RNA polymerase II transcription subunit 13-like (Med13l) (Mus musculus (Mouse)).